The sequence spans 248 residues: Ubiquinone/menaquinone biosynthesis C-methyltransferase UbiE (248 aa).

2 residues coordinate S-adenosyl-L-methionine: S68 and D92.

Belongs to the class I-like SAM-binding methyltransferase superfamily. MenG/UbiE family.

It catalyses the reaction a 2-demethylmenaquinol + S-adenosyl-L-methionine = a menaquinol + S-adenosyl-L-homocysteine + H(+). It carries out the reaction a 2-methoxy-6-(all-trans-polyprenyl)benzene-1,4-diol + S-adenosyl-L-methionine = a 5-methoxy-2-methyl-3-(all-trans-polyprenyl)benzene-1,4-diol + S-adenosyl-L-homocysteine + H(+). It participates in quinol/quinone metabolism; menaquinone biosynthesis; menaquinol from 1,4-dihydroxy-2-naphthoate: step 2/2. Its pathway is cofactor biosynthesis; ubiquinone biosynthesis. Its function is as follows. Methyltransferase required for the conversion of demethylmenaquinol (DMKH2) to menaquinol (MKH2) and the conversion of 2-polyprenyl-6-methoxy-1,4-benzoquinol (DDMQH2) to 2-polyprenyl-3-methyl-6-methoxy-1,4-benzoquinol (DMQH2). This is Ubiquinone/menaquinone biosynthesis C-methyltransferase UbiE from Rickettsia africae (strain ESF-5).